The following is a 190-amino-acid chain: Scytalone dehydratase-like protein Arp1 (190 aa).

Tyr67 contacts substrate. Active-site residues include His102 and His127. Asn148 serves as a coordination point for substrate.

The protein belongs to the scytalone dehydratase family. Homotrimer. Each subunit contains an active site, located in the central part of the hydrophobic core of the monomer, which functions independently.

In terms of biological role, scytalone dehydratase-like protein; part of the Pks2 gene cluster that mediates the formation of infectious structures (appressoria), enabling these fungi to kill insects faster. The product of the Pks2 gene cluster is different from the one of Pks1 and has still not been identified. In Metarhizium anisopliae (strain ARSEF 549), this protein is Scytalone dehydratase-like protein Arp1.